A 452-amino-acid polypeptide reads, in one-letter code: Deoxybrevianamide E synthase notF (452 aa).

The span at 1–19 (MTAPELRVDTFRAPEDAPK) shows a compositional bias: basic and acidic residues. The interval 1–38 (MTAPELRVDTFRAPEDAPKEPSAQQPRLPSSPSPAQAL) is disordered. A compositionally biased stretch (low complexity) spans 21-38 (PSAQQPRLPSSPSPAQAL). Glu108 provides a ligand contact to brevianamide F. Residues Arg122, Lys212, Tyr214, Lys282, Tyr284, Tyr371, Tyr436, and Tyr440 each coordinate dimethylallyl diphosphate.

This sequence belongs to the tryptophan dimethylallyltransferase family. Monomer.

It catalyses the reaction brevianamide F + dimethylallyl diphosphate = deoxybrevianamide E + diphosphate. It participates in alkaloid biosynthesis. Its activity is regulated as follows. Addition of 5 mM Mg(2+), Ca(2+) or Mn(2+) slightly enhances catalysis (about 100-120%). Significant reduction of enzyme activity (2%-35%) is observed with Cu(2+), Zn(2+), Fe(2+), or Sn(2+) (5 mM). In terms of biological role, deoxybrevianamide E synthase; part of the gene cluster that mediates the biosynthesis of notoamide, a fungal indole alkaloid that belongs to a family of natural products containing a characteristic bicyclo[2.2.2]diazaoctane core. The first step of notoamide biosynthesis involves coupling of L-proline and L-tryptophan by the bimodular NRPS notE, to produce cyclo-L-tryptophan-L-proline called brevianamide F. The reverse prenyltransferase notF then acts as a deoxybrevianamide E synthase and converts brevianamide F to deoxybrevianamide E via reverse prenylation at C-2 of the indole ring leading to the bicyclo[2.2.2]diazaoctane core. Deoxybrevianamide E is further hydroxylated at C-6 of the indole ring, likely catalyzed by the cytochrome P450 monooxygenase notG, to yield 6-hydroxy-deoxybrevianamide E. 6-hydroxy-deoxybrevianamide E is a specific substrate of the prenyltransferase notC for normal prenylation at C-7 to produce 6-hydroxy-7-prenyl-deoxybrevianamide, also called notoamide S. As the proposed pivotal branching point in notoamide biosynthesis, notoamide S can be diverted to notoamide E through an oxidative pyran ring closure putatively catalyzed by either notH cytochrome P450 monooxygenase or the notD FAD-linked oxidoreductase. This step would be followed by an indole 2,3-epoxidation-initiated pinacol-like rearrangement catalyzed by the notB FAD-dependent monooxygenase leading to the formation of notoamide C and notoamide D. On the other hand notoamide S is converted to notoamide T by notH (or notD), a bifunctional oxidase that also functions as the intramolecular Diels-Alderase responsible for generation of (+)-notoamide T. To generate antipodal (-)-notoaminide T, notH' (or notD') in Aspergillus versicolor is expected to catalyze a Diels-Alder reaction leading to the opposite stereochemistry. The remaining oxidoreductase notD (or notH) likely catalyzes the oxidative pyran ring formation to yield (+)-stephacidin A. The FAD-dependent monooxygenase notI is highly similar to notB and is predicted to catalyze a similar conversion from (+)-stephacidin A to (-)-notoamide B via the 2,3-epoxidation of (+)-stephacidin A followed by a pinacol-type rearrangement. Finally, it remains unclear which enzyme could be responsible for the final hydroxylation steps leading to notoamide A and sclerotiamide. The sequence is that of Deoxybrevianamide E synthase notF from Aspergillus sp. (strain MF297-2).